The following is a 318-amino-acid chain: NADH-ubiquinone oxidoreductase chain 1 (318 aa).

8 consecutive transmembrane segments (helical) span residues 2–22 (FFINIISLIIPILLAVAFLTL), 70–90 (MFILAPILALSLALTMWIPLP), 100–120 (LGVLFMLAMSSLAVYSILWSG), 147–167 (AIILLSVLLMNGSFTLSTLII), 171–191 (HMWLIFPAWPLAMMWFISTLA), 223–243 (FFLAEYANIIMMNILTTILFF), 253–273 (ELYSINFTMKTLLLTICFLWI), and 294–314 (LPLTLALCMWHVALPIITASI).

Belongs to the complex I subunit 1 family. As to quaternary structure, core subunit of respiratory chain NADH dehydrogenase (Complex I) which is composed of 45 different subunits.

It localises to the mitochondrion inner membrane. It carries out the reaction a ubiquinone + NADH + 5 H(+)(in) = a ubiquinol + NAD(+) + 4 H(+)(out). Core subunit of the mitochondrial membrane respiratory chain NADH dehydrogenase (Complex I) which catalyzes electron transfer from NADH through the respiratory chain, using ubiquinone as an electron acceptor. Essential for the catalytic activity and assembly of complex I. The chain is NADH-ubiquinone oxidoreductase chain 1 (MT-ND1) from Canis lupus familiaris (Dog).